The sequence spans 322 residues: Ribosomal RNA small subunit methyltransferase H (322 aa).

S-adenosyl-L-methionine-binding positions include 47 to 49, Asp-67, Phe-93, Asp-112, and Gln-119; that span reads GGH.

The protein belongs to the methyltransferase superfamily. RsmH family.

The protein resides in the cytoplasm. It catalyses the reaction cytidine(1402) in 16S rRNA + S-adenosyl-L-methionine = N(4)-methylcytidine(1402) in 16S rRNA + S-adenosyl-L-homocysteine + H(+). In terms of biological role, specifically methylates the N4 position of cytidine in position 1402 (C1402) of 16S rRNA. This Stenotrophomonas maltophilia (strain K279a) protein is Ribosomal RNA small subunit methyltransferase H.